We begin with the raw amino-acid sequence, 164 residues long: Cyanate hydratase (164 aa).

Active-site residues include arginine 90, glutamate 93, and serine 116.

The protein belongs to the cyanase family.

The catalysed reaction is cyanate + hydrogencarbonate + 3 H(+) = NH4(+) + 2 CO2. Catalyzes the reaction of cyanate with bicarbonate to produce ammonia and carbon dioxide. The polypeptide is Cyanate hydratase (Vitis vinifera (Grape)).